Consider the following 1109-residue polypeptide: Protein translocase subunit SecA (1109 aa).

Residues Q175, G193–T197, and D695 contribute to the ATP site. The tract at residues V1038–S1109 is disordered. Composition is skewed to basic and acidic residues over residues Q1045–L1059 and D1071–G1088. Zn(2+) contacts are provided by C1093, C1095, C1104, and H1105. Positions K1099 to S1109 are enriched in basic residues.

The protein belongs to the SecA family. Monomer and homodimer. Part of the essential Sec protein translocation apparatus which comprises SecA, SecYEG and auxiliary proteins SecDF. Other proteins may also be involved. Zn(2+) is required as a cofactor.

The protein resides in the cell inner membrane. It localises to the cytoplasm. It carries out the reaction ATP + H2O + cellular proteinSide 1 = ADP + phosphate + cellular proteinSide 2.. Part of the Sec protein translocase complex. Interacts with the SecYEG preprotein conducting channel. Has a central role in coupling the hydrolysis of ATP to the transfer of proteins into and across the cell membrane, serving as an ATP-driven molecular motor driving the stepwise translocation of polypeptide chains across the membrane. This is Protein translocase subunit SecA from Bacteroides fragilis (strain ATCC 25285 / DSM 2151 / CCUG 4856 / JCM 11019 / LMG 10263 / NCTC 9343 / Onslow / VPI 2553 / EN-2).